The primary structure comprises 137 residues: Envelope glycoprotein L (137 aa).

Positions 1–25 (MRTVGVFLATCLVTIFVLPTWGNWA) are cleaved as a signal peptide. Positions 23–128 (NWAYPCCHVT…SVEDLFGANL (106 aa)) are interaction with gH. Disulfide bonds link cysteine 28-cysteine 56 and cysteine 29-cysteine 79.

It belongs to the herpesviridae glycoprotein L family. As to quaternary structure, interacts with glycoprotein H (gH); this interaction is necessary for the correct processing and cell surface expression of gH. The heterodimer gH/gL seems to interact with gB trimers during fusion. The heterodimer gH/gL interacts with host EPHA2 to facilitate virus internalization and fusion.

Its subcellular location is the virion membrane. It is found in the host cell membrane. It localises to the host Golgi apparatus. The protein resides in the host trans-Golgi network. Functionally, the heterodimer glycoprotein H-glycoprotein L is required for the fusion of viral and plasma membranes leading to virus entry into the host cell. Acts as a functional inhibitor of gH and maintains gH in an inhibited form. Upon binding to host integrins, gL dissociates from gH leading to activation of the viral fusion glycoproteins gB and gH. The heterodimer gH/gL targets also host EPHA2 to promote viral entry. In Epstein-Barr virus (strain AG876) (HHV-4), this protein is Envelope glycoprotein L.